Consider the following 136-residue polypeptide: MGEMEREGATAKVGAGKVGAGKVGAAKAGAAPAAAQGAGTKVVAAQGAGTKVVAAQGAGAKAAAVGVGKVGAGAKAVGGTIWSGKGLALGLGMGLGAWGPLILGVVGAGAVYAYMKSRDIEAAQSDEEVELRDALS.

Topologically, residues 1–85 are cytoplasmic; it reads MGEMEREGAT…AVGGTIWSGK (85 aa). The segment at 86–95 is GL repeat; it reads GLALGLGMGL. Residues 86-106 form a helical membrane-spanning segment; sequence GLALGLGMGLGAWGPLILGVV. The Lumenal portion of the chain corresponds to 107–136; the sequence is GAGAVYAYMKSRDIEAAQSDEEVELRDALS. Residues 115–136 are MIC, self-assembles, binds magnetite, Fe(2+) and Fe(3+); that stretch reads MKSRDIEAAQSDEEVELRDALS.

The protein belongs to the magnetosome Mms6 family. As to quaternary structure, full length protein oligomerizes and interacts with MamA. Post-translationally, may undergo cleavage.

It is found in the magnetosome membrane. In terms of biological role, promotes the formation of magnetite in Fe(2+)-rich conditions, when magnetite is not readily formed. Binds both Fe(2+) and Fe(3+). May help control the production of crystals with a specific morphology. May function with MamX, MamY amd MamZ in biomineralization. The 4 genes of this operon collectively influence magnetosome size and number. This chain is Magnetite biomineralization protein Mms6, found in Magnetospirillum gryphiswaldense (strain DSM 6361 / JCM 21280 / NBRC 15271 / MSR-1).